A 258-amino-acid polypeptide reads, in one-letter code: MSSATQSARFSPSPISVEHLGTIGYVDAWDRQRELAAERAENVGTDTLLLLEHPAVYTAGRRTEPEDRPTDGTPVIDVDRGGKITWHGPGQLVGYPIVKLAEPVDVVRYVRRLEQALITVCTDLGIVCGRVDGRSGVWLPASFDNGQWLPERKVAAIGVRVQRGVALHGFSLNCNSVLTGFDAIIPCGIRDAGVTSLSRELGRDVTVEEVTPAVTAAVVAALDGELPVTEHDIERVTFDSAAAGTTSSAPTFTTVQYG.

The 185-residue stretch at 42-226 folds into the BPL/LPL catalytic domain; it reads NVGTDTLLLL…AVVAALDGEL (185 aa). Substrate-binding positions include 80 to 87, 156 to 158, and 169 to 171; these read RGGKITWH, AIG, and GFS. The active-site Acyl-thioester intermediate is C187.

This sequence belongs to the LipB family.

The protein resides in the cytoplasm. It catalyses the reaction octanoyl-[ACP] + L-lysyl-[protein] = N(6)-octanoyl-L-lysyl-[protein] + holo-[ACP] + H(+). It participates in protein modification; protein lipoylation via endogenous pathway; protein N(6)-(lipoyl)lysine from octanoyl-[acyl-carrier-protein]: step 1/2. Its function is as follows. Catalyzes the transfer of endogenously produced octanoic acid from octanoyl-acyl-carrier-protein onto the lipoyl domains of lipoate-dependent enzymes. Lipoyl-ACP can also act as a substrate although octanoyl-ACP is likely to be the physiological substrate. This is Octanoyltransferase from Rhodococcus jostii (strain RHA1).